A 37-amino-acid polypeptide reads, in one-letter code: Defensin-A (37 aa).

Disulfide bonds link Cys4–Cys25, Cys10–Cys33, and Cys14–Cys35.

It is found in the secreted. Functionally, has antibacterial activity against M.luteus and E.coli. This chain is Defensin-A, found in Mytilus edulis (Blue mussel).